Here is a 468-residue protein sequence, read N- to C-terminus: 3-isopropylmalate dehydratase large subunit (468 aa).

[4Fe-4S] cluster-binding residues include Cys-349, Cys-409, and Cys-412.

The protein belongs to the aconitase/IPM isomerase family. LeuC type 1 subfamily. Heterodimer of LeuC and LeuD. The cofactor is [4Fe-4S] cluster.

The catalysed reaction is (2R,3S)-3-isopropylmalate = (2S)-2-isopropylmalate. It participates in amino-acid biosynthesis; L-leucine biosynthesis; L-leucine from 3-methyl-2-oxobutanoate: step 2/4. Its function is as follows. Catalyzes the isomerization between 2-isopropylmalate and 3-isopropylmalate, via the formation of 2-isopropylmaleate. This chain is 3-isopropylmalate dehydratase large subunit, found in Jannaschia sp. (strain CCS1).